The following is a 98-amino-acid chain: Ferredoxin-like protein (98 aa).

The 4Fe-4S ferredoxin-type domain occupies Gly57–Pro87.

This sequence to ferredoxins from P.putida and C.tartarivorum, ferredoxin I from A.vinelandii, ferredoxin II from D.desulfuricans.

In terms of biological role, could be a 3Fe-4S cluster-containing protein. The polypeptide is Ferredoxin-like protein (fixX) (Bradyrhizobium diazoefficiens (strain JCM 10833 / BCRC 13528 / IAM 13628 / NBRC 14792 / USDA 110)).